Reading from the N-terminus, the 89-residue chain is Small ribosomal subunit protein uS14 (89 aa).

It belongs to the universal ribosomal protein uS14 family. In terms of assembly, part of the 30S ribosomal subunit. Contacts proteins S3 and S10.

Its function is as follows. Binds 16S rRNA, required for the assembly of 30S particles and may also be responsible for determining the conformation of the 16S rRNA at the A site. The chain is Small ribosomal subunit protein uS14 from Azobacteroides pseudotrichonymphae genomovar. CFP2.